Reading from the N-terminus, the 425-residue chain is Serine--tRNA ligase (425 aa).

Position 228-230 (228-230) interacts with L-serine; the sequence is TAE. 259-261 lines the ATP pocket; that stretch reads RSE. Glu282 contacts L-serine. 346–349 lines the ATP pocket; sequence EIAS. Ser382 is a binding site for L-serine.

This sequence belongs to the class-II aminoacyl-tRNA synthetase family. Type-1 seryl-tRNA synthetase subfamily. As to quaternary structure, homodimer. The tRNA molecule binds across the dimer.

Its subcellular location is the cytoplasm. It carries out the reaction tRNA(Ser) + L-serine + ATP = L-seryl-tRNA(Ser) + AMP + diphosphate + H(+). The catalysed reaction is tRNA(Sec) + L-serine + ATP = L-seryl-tRNA(Sec) + AMP + diphosphate + H(+). Its pathway is aminoacyl-tRNA biosynthesis; selenocysteinyl-tRNA(Sec) biosynthesis; L-seryl-tRNA(Sec) from L-serine and tRNA(Sec): step 1/1. In terms of biological role, catalyzes the attachment of serine to tRNA(Ser). Is also able to aminoacylate tRNA(Sec) with serine, to form the misacylated tRNA L-seryl-tRNA(Sec), which will be further converted into selenocysteinyl-tRNA(Sec). The sequence is that of Serine--tRNA ligase from Rickettsia rickettsii (strain Iowa).